The sequence spans 108 residues: Translation initiation factor 1A (108 aa).

The 75-residue stretch at 10-84 (IRVITPNKKS…EKGDIIYRYT (75 aa)) folds into the S1-like domain.

Belongs to the eIF-1A family.

Functionally, seems to be required for maximal rate of protein biosynthesis. Enhances ribosome dissociation into subunits and stabilizes the binding of the initiator Met-tRNA(I) to 40 S ribosomal subunits. The sequence is that of Translation initiation factor 1A from Picrophilus torridus (strain ATCC 700027 / DSM 9790 / JCM 10055 / NBRC 100828 / KAW 2/3).